We begin with the raw amino-acid sequence, 289 residues long: RNA-binding protein CP29B, chloroplastic (289 aa).

Residues 1–62 constitute a chloroplast transit peptide; it reads MAASASSLAL…NSPASRFARN (62 aa). Ser-6 and Ser-12 each carry phosphoserine. Position 63 is an N-acetylvaline (Val-63). The RRM 1 domain maps to 91–169; the sequence is LKLFVGNLPF…RPLRVNAGPP (79 aa). The interval 158–199 is disordered; that stretch reads DGRPLRVNAGPPPPKREDGFSRGPRSSFGSSGSGYGGGGGSG. Positions 170–203 are linker (Gly-rich); it reads PPKREDGFSRGPRSSFGSSGSGYGGGGGSGAGSG. Low complexity predominate over residues 178-187; the sequence is SRGPRSSFGS. A compositionally biased stretch (gly residues) spans 188–199; the sequence is SGSGYGGGGGSG. One can recognise an RRM 2 domain in the interval 204–282; it reads NRVYVGNLSW…RQIRVSEAEA (79 aa).

ADP-ribosylated by the Pseudomonas syringae type III effector HopU1. ADP-ribosylation reduces the ability of the protein to bind RNA. Post-translationally, phosphorylated on tyrosine residues after treatment with abscisic acid (ABA). Phosphorylation may reduce the ability of the protein to bind RNA.

The protein resides in the plastid. It localises to the chloroplast. Could be involved in splicing and/or processing of chloroplast RNA's. This is RNA-binding protein CP29B, chloroplastic from Arabidopsis thaliana (Mouse-ear cress).